Here is a 177-residue protein sequence, read N- to C-terminus: Disulfide bond formation protein B (177 aa).

Topologically, residues 1 to 14 (MMVWNWIDRTPRRV) are cytoplasmic. The helical transmembrane segment at 15–31 (LALISLACVALLACGLY) threads the bilayer. The Periplasmic portion of the chain corresponds to 32-49 (LQHVVGLVPCPMCIVQRY). An intrachain disulfide couples C41 to C44. A helical transmembrane segment spans residues 50–64 (ALIGLALLTGLASAR). Over 65–70 (SAKGWW) the chain is Cytoplasmic. A helical membrane pass occupies residues 71 to 89 (LTLSALAALTAGFGATVAA). The Periplasmic segment spans residues 90–145 (RQSWLQWYPPQSVSCGRDFYGMIESFPLSRAIPMILRGSGDCAAVDWSLLGGSIAN). A disulfide bond links C104 and C131. Residues 146–164 (WSFLCFALLGLLLLALLAR) traverse the membrane as a helical segment. Topologically, residues 165–177 (GVRGARQRAPAPV) are cytoplasmic.

This sequence belongs to the DsbB family.

Its subcellular location is the cell inner membrane. Functionally, required for disulfide bond formation in some periplasmic proteins. Acts by oxidizing the DsbA protein. The polypeptide is Disulfide bond formation protein B (Verminephrobacter eiseniae (strain EF01-2)).